We begin with the raw amino-acid sequence, 113 residues long: Large ribosomal subunit protein uL22 (113 aa).

This sequence belongs to the universal ribosomal protein uL22 family. In terms of assembly, part of the 50S ribosomal subunit.

This protein binds specifically to 23S rRNA; its binding is stimulated by other ribosomal proteins, e.g. L4, L17, and L20. It is important during the early stages of 50S assembly. It makes multiple contacts with different domains of the 23S rRNA in the assembled 50S subunit and ribosome. Its function is as follows. The globular domain of the protein is located near the polypeptide exit tunnel on the outside of the subunit, while an extended beta-hairpin is found that lines the wall of the exit tunnel in the center of the 70S ribosome. The chain is Large ribosomal subunit protein uL22 from Geobacillus kaustophilus (strain HTA426).